The primary structure comprises 148 residues: Mediator of RNA polymerase II transcription subunit 31 (148 aa).

This sequence belongs to the Mediator complex subunit 31 family. In terms of assembly, component of the Mediator complex.

Its subcellular location is the nucleus. Its function is as follows. Component of the Mediator complex, a coactivator involved in the regulated transcription of nearly all RNA polymerase II-dependent genes. Mediator functions as a bridge to convey information from gene-specific regulatory proteins to the basal RNA polymerase II transcription machinery. Mediator is recruited to promoters by direct interactions with regulatory proteins and serves as a scaffold for the assembly of a functional preinitiation complex with RNA polymerase II and the general transcription factors. The sequence is that of Mediator of RNA polymerase II transcription subunit 31 from Taenia solium (Pork tapeworm).